The sequence spans 1149 residues: DNA-directed RNA polymerase III subunit RPC2 (1149 aa).

Positions 1095, 1098, 1107, and 1110 each coordinate Zn(2+). The segment at 1095–1110 (CDKCGLMGYSGWCTTC) adopts a C4-type zinc-finger fold.

This sequence belongs to the RNA polymerase beta chain family. Component of the RNA polymerase III (Pol III) complex consisting of 17 subunits.

The protein localises to the nucleus. It carries out the reaction RNA(n) + a ribonucleoside 5'-triphosphate = RNA(n+1) + diphosphate. In terms of biological role, DNA-dependent RNA polymerase catalyzes the transcription of DNA into RNA using the four ribonucleoside triphosphates as substrates. Second largest core component of RNA polymerase III which synthesizes small RNAs, such as 5S rRNA and tRNAs. Proposed to contribute to the polymerase catalytic activity and forms the polymerase active center together with the largest subunit. Pol III is composed of mobile elements and RPC2 is part of the core element with the central large cleft and probably a clamp element that moves to open and close the cleft. The polypeptide is DNA-directed RNA polymerase III subunit RPC2 (RET1) (Saccharomyces cerevisiae (strain ATCC 204508 / S288c) (Baker's yeast)).